The following is a 135-amino-acid chain: Ribonuclease P protein component (135 aa).

Positions 115–135 are disordered; that stretch reads TNETVSPVSDTPLPQHERGSQ.

The protein belongs to the RnpA family. In terms of assembly, consists of a catalytic RNA component (M1 or rnpB) and a protein subunit.

It carries out the reaction Endonucleolytic cleavage of RNA, removing 5'-extranucleotides from tRNA precursor.. RNaseP catalyzes the removal of the 5'-leader sequence from pre-tRNA to produce the mature 5'-terminus. It can also cleave other RNA substrates such as 4.5S RNA. The protein component plays an auxiliary but essential role in vivo by binding to the 5'-leader sequence and broadening the substrate specificity of the ribozyme. This Chloroflexus aurantiacus (strain ATCC 29366 / DSM 635 / J-10-fl) protein is Ribonuclease P protein component.